The chain runs to 144 residues: Protein WAP-3 (144 aa).

Positions 1–21 are cleaved as a signal peptide; sequence MRSRSFLVLVAVFLICETLVA. The disordered stretch occupies residues 28-49; the sequence is RGPKGQGQDPVEGQDQDEGQGP. Position 34 (Gly-34) is a region of interest, 8 X 6 AA approximate tandem repeats. A run of 8 repeats spans residues 34–39, 40–45, 46–51, 58–63, 64–69, 70–75, 76–81, and 82–87. A disordered region spans residues 64 to 85; it reads GQDPVEGQDPVKAQLPDKVQDP. The WAP domain occupies 97–144; sequence LFPKPGVCPKIIFCPLVNPPIKCWRDSHCPGVKKCCPSLCGKGCVTPR. 4 disulfide bridges follow: Cys-104–Cys-132, Cys-110–Cys-136, Cys-119–Cys-131, and Cys-125–Cys-140.

Large intestine (relatively low levels).

This Sus scrofa (Pig) protein is Protein WAP-3.